Consider the following 453-residue polypeptide: Glutamyl-tRNA(Gln) amidotransferase subunit A (453 aa).

Active-site charge relay system residues include K56 and S131. The Acyl-ester intermediate role is filled by S155.

It belongs to the amidase family. GatA subfamily. As to quaternary structure, heterotrimer of A, B and C subunits.

The catalysed reaction is L-glutamyl-tRNA(Gln) + L-glutamine + ATP + H2O = L-glutaminyl-tRNA(Gln) + L-glutamate + ADP + phosphate + H(+). Functionally, allows the formation of correctly charged Gln-tRNA(Gln) through the transamidation of misacylated Glu-tRNA(Gln) in organisms which lack glutaminyl-tRNA synthetase. The reaction takes place in the presence of glutamine and ATP through an activated gamma-phospho-Glu-tRNA(Gln). The chain is Glutamyl-tRNA(Gln) amidotransferase subunit A from Campylobacter jejuni subsp. doylei (strain ATCC BAA-1458 / RM4099 / 269.97).